Here is a 360-residue protein sequence, read N- to C-terminus: Replication-associated protein (360 aa).

The CRESS-DNA virus Rep endonuclease domain maps to 11–114 (SHRNANTFLT…PLAVFERGTF (104 aa)). Positions 18 to 21 (FLTY) match the RCR-1 motif. Residues glutamate 52, histidine 60, and histidine 62 each contribute to the a divalent metal cation site. Residues 60–62 (HLH) carry the RCR-2 motif. Tyrosine 100 functions as the For DNA cleavage activity in the catalytic mechanism. The RCR-3 signature appears at 100–103 (YILK). A divalent metal cation is bound at residue glutamate 104. The tract at residues 175-187 (SANKLFPEIQEEF) is oligomerization. Residue 229–236 (GPTRTGKS) participates in ATP binding. Residues 252 to 270 (VDWSSYNEDAIYNIVDDIP) form a transactivation region. Positions 292 to 303 (KYGKKKKVQKKS) match the Nuclear localization signal motif.

It belongs to the geminiviridae Rep protein family. Homooligomer. Rep binds to repeated DNA motifs (iterons). Forms the O-complex, which is a Rep-DNA complex involved in the initiation of RCR. Part of the C- and V-complexes which are RepA-Rep-DNA complexes involved in the c-sense and v-sense transcription. The cofactor is Mg(2+). Mn(2+) is required as a cofactor.

The protein resides in the host nucleus. In terms of biological role, essential for the replication of viral ssDNA. The closed circular ssDNA genome is first converted to a superhelical dsDNA. Rep binds a specific region at the genome origin of replication. It introduces an endonucleolytic nick within the conserved sequence 5'-TAATATTAC-3' in the intergenic region of the genome present in all geminiviruses, thereby initiating the rolling circle replication (RCR). Following cleavage, binds covalently to the 5'-phosphate of DNA as a tyrosyl ester. The cleavage gives rise to a free 3'-OH that serves as a primer for the cellular DNA polymerase. The polymerase synthesizes the (+) strand DNA by rolling circle mechanism. After one round of replication, a Rep-catalyzed nucleotidyl transfer reaction releases a circular single-stranded virus genome, thereby terminating the replication. Displays origin-specific DNA cleavage, nucleotidyl transferase, ATPase and helicase activities. Acts as an inhibitor of C-sense gene transcription. The sequence is that of Replication-associated protein from Maize streak virus genotype A (isolate Nigeria) (MSV).